We begin with the raw amino-acid sequence, 386 residues long: S-adenosylmethionine synthase (386 aa).

Histidine 17 contributes to the ATP binding site. Aspartate 19 lines the Mg(2+) pocket. Glutamate 45 contributes to the K(+) binding site. The L-methionine site is built by glutamate 58 and glutamine 101. The flexible loop stretch occupies residues 101 to 111 (QSPDISQGVTE). Residues 168 to 170 (DAK), aspartate 242, 248 to 249 (RK), alanine 265, and lysine 269 each bind ATP. Residue aspartate 242 coordinates L-methionine. Lysine 273 is an L-methionine binding site.

Belongs to the AdoMet synthase family. Homotetramer; dimer of dimers. Mg(2+) serves as cofactor. It depends on K(+) as a cofactor.

The protein localises to the cytoplasm. It carries out the reaction L-methionine + ATP + H2O = S-adenosyl-L-methionine + phosphate + diphosphate. Its pathway is amino-acid biosynthesis; S-adenosyl-L-methionine biosynthesis; S-adenosyl-L-methionine from L-methionine: step 1/1. Functionally, catalyzes the formation of S-adenosylmethionine (AdoMet) from methionine and ATP. The overall synthetic reaction is composed of two sequential steps, AdoMet formation and the subsequent tripolyphosphate hydrolysis which occurs prior to release of AdoMet from the enzyme. The sequence is that of S-adenosylmethionine synthase from Leptospira borgpetersenii serovar Hardjo-bovis (strain JB197).